The following is an 802-amino-acid chain: MRYPSLARLPRRALSGLARAPVRLQSQNFLSQRCASTAALRSASAVAPACQSALHRQFQQRRYASATASAVLEAAASSPDNLTQEAIIDNLDPVEAERLSRVRNIGIAAHIDSGKTTCTERVLFYTGRIKAIHEVRGGDKVGAKMDSMDLEREKGITIQSAATFCDWVKKDKEGKEHKYHINLIDTPGHIDFTIEVERALRVLDGAVMILCAVSGVQSQTMTVDRQMRRYNVPRISFINKMDRMGANPFKAIDQINTKLKIPAAAVQVPIGAEDEFEGVVDLLRMKAIYNVGPSGEELRETDEIPEKVKAVAEERRNMLIETLADVDDEIAELFLSETEPTEQQLRDAIRRATIGLKFTPVFMGSALANKSVQPMLDGVIDYLPNPSEVQNLALDKKRDEASVKLVPYNSLPLVGLAFKLEESNFGQLTYIRVYQGTLRKGANVFNARNDKKVKIPRIVRMHSNEMEEVSEIGAGEICAVFGVDCASGDTFTDGQLGYTMSSMFVPEPVISLSIKPKNNKDAAKFSKAMARFQREDPTFRVTFDAESEQTLISGMGELHLDIYIERMRREYNVDCETGPPQVAYRETIGNHVEFDHLLKKQSGGPGDYARVVGYMEPTEKLEENVFEEQIVGGSISEKFLFACEKGFHLACEKGPLIGHKVLGTKMLINDGATHMTDSSEMSFKNATQQAFRKAFMESNPSVLEPMMKTVVTAPAEFQGDVIALLNKRNATINDSDVGVDEVTVYADCSLNGMFGFSSHLRAATQGKGEYTMEFSHYEKATPQLQKELIAKYQKAQADRHKK.

A mitochondrion-targeting transit peptide spans 1-24 (MRYPSLARLPRRALSGLARAPVRL). Residues 100–387 (SRVRNIGIAA…GVIDYLPNPS (288 aa)) enclose the tr-type G domain. Residues 109-116 (AHIDSGKT), 185-189 (DTPGH), and 239-242 (NKMD) contribute to the GTP site.

It belongs to the TRAFAC class translation factor GTPase superfamily. Classic translation factor GTPase family. EF-G/EF-2 subfamily.

The protein localises to the mitochondrion. The protein operates within protein biosynthesis; polypeptide chain elongation. Functionally, mitochondrial GTPase that catalyzes the GTP-dependent ribosomal translocation step during translation elongation. During this step, the ribosome changes from the pre-translocational (PRE) to the post-translocational (POST) state as the newly formed A-site-bound peptidyl-tRNA and P-site-bound deacylated tRNA move to the P and E sites, respectively. Catalyzes the coordinated movement of the two tRNA molecules, the mRNA and conformational changes in the ribosome. The protein is Elongation factor G, mitochondrial (mef1) of Aspergillus terreus (strain NIH 2624 / FGSC A1156).